Reading from the N-terminus, the 87-residue chain is DNA-directed RNA polymerase subunit omega (87 aa).

It belongs to the RNA polymerase subunit omega family. As to quaternary structure, the RNAP catalytic core consists of 2 alpha, 1 beta, 1 beta' and 1 omega subunit. When a sigma factor is associated with the core the holoenzyme is formed, which can initiate transcription.

The catalysed reaction is RNA(n) + a ribonucleoside 5'-triphosphate = RNA(n+1) + diphosphate. Functionally, promotes RNA polymerase assembly. Latches the N- and C-terminal regions of the beta' subunit thereby facilitating its interaction with the beta and alpha subunits. The chain is DNA-directed RNA polymerase subunit omega from Alcanivorax borkumensis (strain ATCC 700651 / DSM 11573 / NCIMB 13689 / SK2).